Here is a 459-residue protein sequence, read N- to C-terminus: Ribulose bisphosphate carboxylase large chain (459 aa).

Lysine 4 is modified (N6,N6,N6-trimethyllysine). Substrate contacts are provided by asparagine 113 and threonine 163. Catalysis depends on lysine 165, which acts as the Proton acceptor. Lysine 167 contacts substrate. Mg(2+) contacts are provided by lysine 191, aspartate 193, and glutamate 194. Lysine 191 carries the post-translational modification N6-carboxylysine. Histidine 284 functions as the Proton acceptor in the catalytic mechanism. Positions 285, 317, and 369 each coordinate substrate.

The protein belongs to the RuBisCO large chain family. Type I subfamily. In terms of assembly, heterohexadecamer of 8 large chains and 8 small chains; disulfide-linked. The disulfide link is formed within the large subunit homodimers. Mg(2+) is required as a cofactor. In terms of processing, the disulfide bond which can form in the large chain dimeric partners within the hexadecamer appears to be associated with oxidative stress and protein turnover.

It localises to the plastid. The protein localises to the chloroplast. The enzyme catalyses 2 (2R)-3-phosphoglycerate + 2 H(+) = D-ribulose 1,5-bisphosphate + CO2 + H2O. It catalyses the reaction D-ribulose 1,5-bisphosphate + O2 = 2-phosphoglycolate + (2R)-3-phosphoglycerate + 2 H(+). In terms of biological role, ruBisCO catalyzes two reactions: the carboxylation of D-ribulose 1,5-bisphosphate, the primary event in carbon dioxide fixation, as well as the oxidative fragmentation of the pentose substrate in the photorespiration process. Both reactions occur simultaneously and in competition at the same active site. The protein is Ribulose bisphosphate carboxylase large chain of Heuchera micrantha (Alum root).